The primary structure comprises 996 residues: Disease resistance protein RGA4 (996 aa).

The interval 1 to 176 (MEAALLSGFI…PRIHEADLVG (176 aa)) is structured coiled coil (CC) domain. The stretch at 111–138 (NLQLAQQLQRLKRMAAEANQRKQRYTAA) forms a coiled coil. Positions 180 to 462 (DREELLEQLA…RWLAEGFVEP (283 aa)) constitute an NB-ARC domain. LRR repeat units follow at residues 481–503 (RNIIEPINVSNNDKVKTCQTYGM), 504–528 (MREFISHMSISQNFVTFFCDDKFVP), 529–549 (KYVRRLSLHGDTVVNGDNFNG), 577–599 (LRVLDLEKCDDLKDDHLKEICNL), 600–621 (VLLKYLSLGGNISKLPKDIAKL), 622–644 (KDLEALDVRRSKVKIMPVEVFGL), 698–722 (MNKLRKLKIWCTSSAGSTDWTDLRE), 759–781 (PCYLSSLKLHGNFPQLPQFVTSL), 782–804 (RGLKELCLSSTKFTTGLLEALSN), 805–830 (LSYLQYLKLVADELEKFIIKVQGFPR), and 851–874 (LPFLVTLQLLCKDLHGLSDIQIEC).

This sequence belongs to the disease resistance NB-LRR family. Forms homodimer or heterodimer with RGA5 through its coiled coil (CC) domain. In terms of tissue distribution, expressed in leaves.

It is found in the cytoplasm. Its function is as follows. Disease resistance (R) protein. Resistance proteins guard the plant against pathogens that contain an appropriate avirulence protein via an indirect interaction with this avirulence protein. That triggers a defense system including the hypersensitive response, which restricts the pathogen growth. Contribution of RGA5 is required to recognize the effector avirulence proteins AVR-Pia and AVR1-CO39 from M.oryzae. Acts as a constitutively active cell death inducer that is repressed by RGA5. Immune response triggered by the RGA4-RGA5 -mediated recognition of AVR1-CO39 confers resistance to X.oryzae pathovars. This chain is Disease resistance protein RGA4, found in Oryza sativa subsp. japonica (Rice).